Here is a 143-residue protein sequence, read N- to C-terminus: Deoxyuridine 5'-triphosphate nucleotidohydrolase (143 aa).

Substrate contacts are provided by residues 63–65 (RSG), N76, 80–82 (TID), and K90.

Belongs to the dUTPase family. Requires Mg(2+) as cofactor.

The enzyme catalyses dUTP + H2O = dUMP + diphosphate + H(+). The protein operates within pyrimidine metabolism; dUMP biosynthesis; dUMP from dCTP (dUTP route): step 2/2. This enzyme is involved in nucleotide metabolism: it produces dUMP, the immediate precursor of thymidine nucleotides and it decreases the intracellular concentration of dUTP so that uracil cannot be incorporated into DNA. The protein is Deoxyuridine 5'-triphosphate nucleotidohydrolase of Clostridioides difficile (Peptoclostridium difficile).